We begin with the raw amino-acid sequence, 412 residues long: Putative F-box protein At3g22940 (412 aa).

The F-box domain occupies 1–38; it reads MPLEEILSRLPLKSTRAVRSTCKKWDSLFKNRSFISKA.

The chain is Putative F-box protein At3g22940 from Arabidopsis thaliana (Mouse-ear cress).